A 552-amino-acid chain; its full sequence is Urocanate hydratase (552 aa).

NAD(+) is bound by residues 49–50, Gln127, 173–175, Asp193, 239–240, 260–264, 270–271, and Tyr319; these read GG, GMG, NA, QTSAH, and YI. Residue Cys407 is part of the active site. Gly489 is an NAD(+) binding site.

This sequence belongs to the urocanase family. The cofactor is NAD(+).

The protein localises to the cytoplasm. The enzyme catalyses 4-imidazolone-5-propanoate = trans-urocanate + H2O. It functions in the pathway amino-acid degradation; L-histidine degradation into L-glutamate; N-formimidoyl-L-glutamate from L-histidine: step 2/3. Functionally, catalyzes the conversion of urocanate to 4-imidazolone-5-propionate. This is Urocanate hydratase from Bacillus cereus (strain ATCC 14579 / DSM 31 / CCUG 7414 / JCM 2152 / NBRC 15305 / NCIMB 9373 / NCTC 2599 / NRRL B-3711).